Here is a 375-residue protein sequence, read N- to C-terminus: 23S rRNA (uracil(747)-C(5))-methyltransferase RlmC (375 aa).

[4Fe-4S] cluster is bound by residues Cys3, Cys11, Cys14, and Cys87. Gln212, Phe241, Glu262, and Asn307 together coordinate S-adenosyl-L-methionine. Residue Cys334 is the Nucleophile of the active site.

This sequence belongs to the class I-like SAM-binding methyltransferase superfamily. RNA M5U methyltransferase family. RlmC subfamily.

The enzyme catalyses uridine(747) in 23S rRNA + S-adenosyl-L-methionine = 5-methyluridine(747) in 23S rRNA + S-adenosyl-L-homocysteine + H(+). Catalyzes the formation of 5-methyl-uridine at position 747 (m5U747) in 23S rRNA. This chain is 23S rRNA (uracil(747)-C(5))-methyltransferase RlmC, found in Escherichia fergusonii (strain ATCC 35469 / DSM 13698 / CCUG 18766 / IAM 14443 / JCM 21226 / LMG 7866 / NBRC 102419 / NCTC 12128 / CDC 0568-73).